Reading from the N-terminus, the 660-residue chain is DNA primase (660 aa).

A CHC2-type zinc finger spans residues 40 to 64; sequence CPFHKEKTPSFTVSPDKQFYYCFGC. Positions 94–115 are disordered; it reads GMEVPREQGRRDQKPRQPTDSP. The segment covering 97-110 has biased composition (basic and acidic residues); it reads VPREQGRRDQKPRQ. One can recognise a Toprim domain in the interval 261-343; it reads DEIIVVEGYM…GRRARFLFLP (83 aa). 3 residues coordinate Mg(2+): E267, D311, and D313. Disordered regions lie at residues 425-449 and 476-519; these read DPQQVEQLAQQAPATSSMPDYDPGY and QAWK…APVE. The segment covering 428–442 has biased composition (polar residues); sequence QVEQLAQQAPATSSM. Residues 488–498 show a composition bias toward basic and acidic residues; it reads PWSDKPWDKNR.

The protein belongs to the DnaG primase family. Monomer. Interacts with DnaB. Requires Zn(2+) as cofactor. It depends on Mg(2+) as a cofactor.

It catalyses the reaction ssDNA + n NTP = ssDNA/pppN(pN)n-1 hybrid + (n-1) diphosphate.. In terms of biological role, RNA polymerase that catalyzes the synthesis of short RNA molecules used as primers for DNA polymerase during DNA replication. In Pseudomonas putida (strain ATCC 47054 / DSM 6125 / CFBP 8728 / NCIMB 11950 / KT2440), this protein is DNA primase.